A 269-amino-acid polypeptide reads, in one-letter code: Undecaprenyl-diphosphatase (269 aa).

8 consecutive transmembrane segments (helical) span residues 1-21, 39-59, 86-106, 112-132, 144-164, 184-204, 210-230, and 249-269; these read MSIF…FLPI, LPIL…CTVF, LMMI…GLLL, TIDI…LIAS, VTLL…IPGI, AGEF…ILEI, LLAG…FVVG, and FAFY…GFAG.

It belongs to the UppP family.

It is found in the cell inner membrane. It carries out the reaction di-trans,octa-cis-undecaprenyl diphosphate + H2O = di-trans,octa-cis-undecaprenyl phosphate + phosphate + H(+). Catalyzes the dephosphorylation of undecaprenyl diphosphate (UPP). Confers resistance to bacitracin. The polypeptide is Undecaprenyl-diphosphatase (Treponema denticola (strain ATCC 35405 / DSM 14222 / CIP 103919 / JCM 8153 / KCTC 15104)).